Consider the following 393-residue polypeptide: Fasciculation and elongation protein zeta-1 (393 aa).

The segment at 1 to 41 (MEAPLVSLDEEFEDIRPCCTEDPEEKPQSLYGTSPHHLEDP) is disordered. The residue at position 58 (Ser-58) is a Phosphoserine. Residues 130 to 154 (NGNSSDTEIHEKEEEDEFIEKSEND) form a disordered region. Positions 231–299 (SELTELLDQV…KKRRKEKGLS (69 aa)) form a coiled coil. Ser-299 and Ser-317 each carry phosphoserine.

Belongs to the zygin family. In terms of assembly, homodimer. Interacts with UBE4B and SAP30L. Interacts with SCOC and ULK1; SCOC interferes with ULK1-binding to FEZ1. Directly interacts with SCOC and UVRAG. Stabilizes the interaction between SCOC and UVRAG during amino acid starvation. Interacts with the NH2-terminal variable region (V1) of PKC zeta and weakly with that of PKC epsilon. Phosphorylated by protein kinase C zeta; which enhances interaction with UBE4B and polyubiquitination. In terms of processing, polyubiquitinated in a UBE4B-dependent manner; which does not lead to proteasomal degradation and may be important for neurogenic activity. Polyubiquitin linkage seems to be mainly through Lys-26. Brain.

It is found in the cytoplasm. Its subcellular location is the cytoskeleton. It localises to the microtubule organizing center. The protein localises to the centrosome. The protein resides in the cell membrane. In terms of biological role, may be involved in axonal outgrowth as component of the network of molecules that regulate cellular morphology and axon guidance machinery. May participate in the transport of mitochondria and other cargos along microtubules. The protein is Fasciculation and elongation protein zeta-1 (Fez1) of Rattus norvegicus (Rat).